The primary structure comprises 116 residues: MSWRGRSTYRPRPRRYVEPPEMIGPMRPEQFSDEVEPATPEEGEPATQRQDPAAAQEGEDEGASAGQGPKPEADSQEQGHPQTGCECEDGPDGQEMDPPNPEEVKTPEEGEKQSQC.

The tract at residues 1–116 is disordered; it reads MSWRGRSTYR…PEEGEKQSQC (116 aa). 2 stretches are compositionally biased toward acidic residues: residues 31-44 and 86-95; these read FSDE…EEGE and ECEDGPDGQE. Basic and acidic residues predominate over residues 102–116; sequence EEVKTPEEGEKQSQC.

Belongs to the GAGE family. In terms of tissue distribution, not expressed in normal tissues, except in testis, but expressed by a large proportion of tumors of various histological origins.

This chain is G antigen 2D (GAGE2D), found in Homo sapiens (Human).